We begin with the raw amino-acid sequence, 482 residues long: Isoxanthopterin deaminase (482 aa).

Histidine 74 and histidine 76 together coordinate Zn(2+). Glutamine 79 contributes to the substrate binding site. A Zn(2+)-binding site is contributed by histidine 246. Substrate is bound by residues glutamate 249 and histidine 283. Residues histidine 283 and aspartate 334 each coordinate Zn(2+).

It belongs to the metallo-dependent hydrolases superfamily. ATZ/TRZ family. Zn(2+) is required as a cofactor.

The catalysed reaction is a 2-amino-4-hydroxypteridine + H2O + H(+) = a 2,4-dihydroxypteridine + NH4(+). This Unknown prokaryotic organism protein is Isoxanthopterin deaminase.